Reading from the N-terminus, the 382-residue chain is Anthranilate O-methyltransferase 1 (382 aa).

Position 20 (tyrosine 20) interacts with S-adenosyl-L-homocysteine. An anthranilate-binding site is contributed by glutamine 27. Cysteine 61, asparagine 66, aspartate 102, leucine 103, serine 146, and tyrosine 147 together coordinate S-adenosyl-L-homocysteine. Tryptophan 168 contacts anthranilate. 2 residues coordinate Mg(2+): glutamate 268 and phenylalanine 270.

The protein belongs to the methyltransferase superfamily. Type-7 methyltransferase family. SABATH subfamily.

It catalyses the reaction anthranilate + S-adenosyl-L-methionine = O-methyl anthranilate + S-adenosyl-L-homocysteine. Its function is as follows. Methyltransferase involved in the biosynthesis of methyl anthranilate in response to stresses. Utilizes anthranilic acid as substrate, but not salicylic acid. Produces exclusively the O-methyl ester. The sequence is that of Anthranilate O-methyltransferase 1 (AAMT1) from Zea mays (Maize).